Here is a 224-residue protein sequence, read N- to C-terminus: Flagellar L-ring protein (224 aa).

An N-terminal signal peptide occupies residues 1 to 15 (MRSLLFSLTALVLAG). A lipid anchor (N-palmitoyl cysteine) is attached at Cys-16. Residue Cys-16 is the site of S-diacylglycerol cysteine attachment.

The protein belongs to the FlgH family. In terms of assembly, the basal body constitutes a major portion of the flagellar organelle and consists of four rings (L,P,S, and M) mounted on a central rod.

It is found in the cell outer membrane. The protein localises to the bacterial flagellum basal body. Functionally, assembles around the rod to form the L-ring and probably protects the motor/basal body from shearing forces during rotation. This Idiomarina loihiensis (strain ATCC BAA-735 / DSM 15497 / L2-TR) protein is Flagellar L-ring protein.